Here is a 402-residue protein sequence, read N- to C-terminus: NADH-quinone oxidoreductase subunit D (402 aa).

Belongs to the complex I 49 kDa subunit family. NDH-1 is composed of 14 different subunits. Subunits NuoB, C, D, E, F, and G constitute the peripheral sector of the complex.

The protein localises to the cell inner membrane. The catalysed reaction is a quinone + NADH + 5 H(+)(in) = a quinol + NAD(+) + 4 H(+)(out). NDH-1 shuttles electrons from NADH, via FMN and iron-sulfur (Fe-S) centers, to quinones in the respiratory chain. The immediate electron acceptor for the enzyme in this species is believed to be ubiquinone. Couples the redox reaction to proton translocation (for every two electrons transferred, four hydrogen ions are translocated across the cytoplasmic membrane), and thus conserves the redox energy in a proton gradient. The protein is NADH-quinone oxidoreductase subunit D of Cereibacter sphaeroides (strain ATCC 17029 / ATH 2.4.9) (Rhodobacter sphaeroides).